Consider the following 29-residue polypeptide: Dermaseptin-9TR (29 aa).

As to expression, expressed by the skin glands.

The protein localises to the secreted. Its function is as follows. Has antimicrobial activity. The sequence is that of Dermaseptin-9TR from Phyllomedusa trinitatis (Trinidad leaf frog).